We begin with the raw amino-acid sequence, 180 residues long: Large ribosomal subunit protein uL5 (180 aa).

It belongs to the universal ribosomal protein uL5 family. As to quaternary structure, part of the 50S ribosomal subunit; part of the 5S rRNA/L5/L18/L25 subcomplex. Contacts the 5S rRNA and the P site tRNA. Forms a bridge to the 30S subunit in the 70S ribosome.

Functionally, this is one of the proteins that bind and probably mediate the attachment of the 5S RNA into the large ribosomal subunit, where it forms part of the central protuberance. In the 70S ribosome it contacts protein S13 of the 30S subunit (bridge B1b), connecting the 2 subunits; this bridge is implicated in subunit movement. Contacts the P site tRNA; the 5S rRNA and some of its associated proteins might help stabilize positioning of ribosome-bound tRNAs. This Latilactobacillus sakei subsp. sakei (strain 23K) (Lactobacillus sakei subsp. sakei) protein is Large ribosomal subunit protein uL5.